The sequence spans 206 residues: Small ribosomal subunit protein uS4 (206 aa).

The S4 RNA-binding domain maps to 96-156 (GRLDNVVYRM…EKAKNQLRVK (61 aa)).

It belongs to the universal ribosomal protein uS4 family. As to quaternary structure, part of the 30S ribosomal subunit. Contacts protein S5. The interaction surface between S4 and S5 is involved in control of translational fidelity.

One of the primary rRNA binding proteins, it binds directly to 16S rRNA where it nucleates assembly of the body of the 30S subunit. Its function is as follows. With S5 and S12 plays an important role in translational accuracy. This is Small ribosomal subunit protein uS4 from Marinobacter nauticus (strain ATCC 700491 / DSM 11845 / VT8) (Marinobacter aquaeolei).